A 124-amino-acid polypeptide reads, in one-letter code: Small ribosomal subunit protein uS12 (124 aa).

Asp89 is modified (3-methylthioaspartic acid).

Belongs to the universal ribosomal protein uS12 family. Part of the 30S ribosomal subunit. Contacts proteins S8 and S17. May interact with IF1 in the 30S initiation complex.

With S4 and S5 plays an important role in translational accuracy. In terms of biological role, interacts with and stabilizes bases of the 16S rRNA that are involved in tRNA selection in the A site and with the mRNA backbone. Located at the interface of the 30S and 50S subunits, it traverses the body of the 30S subunit contacting proteins on the other side and probably holding the rRNA structure together. The combined cluster of proteins S8, S12 and S17 appears to hold together the shoulder and platform of the 30S subunit. The polypeptide is Small ribosomal subunit protein uS12 (Blochmanniella floridana).